Consider the following 155-residue polypeptide: Glycosylation-dependent cell adhesion molecule 1 (155 aa).

Residues 1-18 form the signal peptide; that stretch reads MKFFAVLLLASLAATSLA. Thr-34 carries O-linked (GalNAc...) threonine glycosylation. 5 positions are modified to phosphoserine: Ser-48, Ser-53, Ser-57, Ser-59, and Ser-65. The interval 74-109 is disordered; it reads ARRHQNQNPKLLHPVPQESSFRNTATQSEETKELTP. Polar residues predominate over residues 90 to 101; it reads QESSFRNTATQS.

The protein belongs to the PP3/GlyCAM-1 family. Highly expressed in whey fraction of camel milk.

In Camelus dromedarius (Dromedary), this protein is Glycosylation-dependent cell adhesion molecule 1 (GLYCAM1).